The sequence spans 776 residues: 5-methyltetrahydropteroyltriglutamate--homocysteine methyltransferase (776 aa).

Residues 13–16 (RELK) and K127 each bind 5-methyltetrahydropteroyltri-L-glutamate. Residues 450-452 (IGS) and E503 each bind L-homocysteine. Residues 450-452 (IGS) and E503 contribute to the L-methionine site. W580 is a 5-methyltetrahydropteroyltri-L-glutamate binding site. D618 is a binding site for L-homocysteine. D618 contributes to the L-methionine binding site. E624 contacts 5-methyltetrahydropteroyltri-L-glutamate. Zn(2+) is bound by residues H660, C662, and E684. Residue H713 is the Proton donor of the active site. Residue C745 coordinates Zn(2+).

This sequence belongs to the vitamin-B12 independent methionine synthase family. Requires Zn(2+) as cofactor.

It catalyses the reaction 5-methyltetrahydropteroyltri-L-glutamate + L-homocysteine = tetrahydropteroyltri-L-glutamate + L-methionine. Its pathway is amino-acid biosynthesis; L-methionine biosynthesis via de novo pathway; L-methionine from L-homocysteine (MetE route): step 1/1. Functionally, catalyzes the transfer of a methyl group from 5-methyltetrahydrofolate to homocysteine resulting in methionine formation. In Mesorhizobium japonicum (strain LMG 29417 / CECT 9101 / MAFF 303099) (Mesorhizobium loti (strain MAFF 303099)), this protein is 5-methyltetrahydropteroyltriglutamate--homocysteine methyltransferase.